The primary structure comprises 304 residues: Murein tetrapeptide carboxypeptidase (304 aa).

Catalysis depends on Ser106, which acts as the Nucleophile. Residues Glu200 and His270 each act as charge relay system in the active site.

The protein belongs to the peptidase S66 family.

It localises to the cytoplasm. It carries out the reaction N-acetyl-D-glucosaminyl-N-acetylmuramoyl-L-alanyl-meso-2,6-diaminoheptanedioyl-D-alanine + H2O = N-acetyl-D-glucosaminyl-N-acetylmuramoyl-L-alanyl-meso-2,6-diaminoheptanedioate + D-alanine. Its pathway is cell wall biogenesis; peptidoglycan recycling. Inhibited by beta-lactams containing a D-amino acid side chain. Releases the terminal D-alanine residue from the cytoplasmic tetrapeptide recycling product L-Ala-gamma-D-Glu-meso-Dap-D-Ala. To a lesser extent, can also cleave D-Ala from murein derivatives containing the tetrapeptide, i.e. MurNAc-tetrapeptide, UDP-MurNAc-tetrapeptide, GlcNAc-MurNAc-tetrapeptide, and GlcNAc-anhMurNAc-tetrapeptide. Does not act on murein sacculi or cross-linked muropeptides. The tripeptides produced by the LcdA reaction can then be reused as peptidoglycan building blocks; LcdA is thereby involved in murein recycling. Is also essential for viability during stationary phase. This chain is Murein tetrapeptide carboxypeptidase (ldcA), found in Escherichia coli (strain K12).